The sequence spans 175 residues: GLLGLGYGGYGYGAALAAPAAVSYAAPAIAAAPAVSYAAPAIAAAPAVSYAAPAIAAAPAISYAAPAIAAAPAVSYAAPAIAAAPAISYAAAPAIRYAAAPAIRYAAPAVARVAPAISYAAVAVARVAPALSYAAPALSYARYAAPALSYAAPAVSYAAPAISYAAPAIAKYALH.

19 repeat units span residues 17-20, 25-28, 31-34, 38-41, 44-47, 51-54, 57-60, 64-67, 70-73, 77-80, 83-86, 91-94, 99-102, 106-109, 134-137, 144-147, 151-154, 158-161, and 165-168.

Functionally, component of the cuticle of migratory locust which contains more than 100 different structural proteins. This is Cuticle protein 16.5, isoform A from Locusta migratoria (Migratory locust).